Here is a 576-residue protein sequence, read N- to C-terminus: WAP, Kazal, immunoglobulin, Kunitz and NTR domain-containing protein 2 (576 aa).

A signal peptide spans 1–34 (MWAPRCRRFWSRWEQVAALLLLLLLLGVPPRSLA). One can recognise a WAP domain in the interval 39–92 (RYSHAGICPNDMNPNLWVDAQSTCRRECETDQECETYEKCCPNVCGTKSCVAAR). 8 cysteine pairs are disulfide-bonded: Cys46/Cys79, Cys62/Cys83, Cys66/Cys78, Cys72/Cys88, Cys134/Cys164, Cys138/Cys157, Cys146/Cys175, and Cys231/Cys287. Residues 126–177 (WDGQPVCKCKDRCEKEPSFTCASDGLTYYNRCYMDAEACSKGITLAVVTCRY) enclose the Kazal-like domain. The Ig-like C2-type domain occupies 210-303 (PALLNNPVHQ…GVLRADFPLS (94 aa)). N-linked (GlcNAc...) asparagine glycosylation occurs at Asn319. 9 disulfide bridges follow: Cys328-Cys378, Cys337-Cys361, Cys353-Cys374, Cys386-Cys436, Cys395-Cys419, Cys411-Cys432, Cys445-Cys515, Cys448-Cys517, and Cys459-Cys566. 2 consecutive BPTI/Kunitz inhibitor domains span residues 328-378 (CLKP…MLAC) and 386-436 (CSLP…EESC). Positions 445-566 (CRACKPRQKL…LREVMHKKTC (122 aa)) constitute an NTR domain. Asn519 carries an N-linked (GlcNAc...) asparagine glycan.

Belongs to the WFIKKN family. In terms of assembly, interacts with both mature and propeptide myostatin/MSTN. As to expression, primarily expressed in ovary, testis and brain, but not in liver. In fetal tissues, it is primarily expressed in brain, skeletal muscle, thymus and kidney.

Its subcellular location is the secreted. Its function is as follows. Protease-inhibitor that contains multiple distinct protease inhibitor domains. Probably has serine protease- and metalloprotease-inhibitor activity. Inhibits the biological activity of mature myostatin, but not activin. In Homo sapiens (Human), this protein is WAP, Kazal, immunoglobulin, Kunitz and NTR domain-containing protein 2 (WFIKKN2).